A 270-amino-acid polypeptide reads, in one-letter code: F420 non-reducing hydrogenase II cytochrome subunit (270 aa).

Transmembrane regions (helical) follow at residues A27 to M47, M57 to S77, I139 to Y159, W173 to L193, and V195 to L215.

The protein belongs to the HupC/HyaC/HydC family. Composed of a large subunit (VhtA), a small subunit (VhtG) and a cytochrome subunit (VhtC). Heme b is required as a cofactor.

It localises to the cell membrane. The enzyme catalyses methanophenazine + H2 = dihydromethanophenazine. Part of the F420 non-reducing hydrogenase II complex that catalyzes the reduction of methanophenazine to dihydromethanophenazine. In Methanosarcina mazei (strain ATCC BAA-159 / DSM 3647 / Goe1 / Go1 / JCM 11833 / OCM 88) (Methanosarcina frisia), this protein is F420 non-reducing hydrogenase II cytochrome subunit.